The sequence spans 275 residues: Low affinity immunoglobulin gamma Fc region receptor III-A (275 aa).

The first 23 residues, 1–23 (MSVWTSRKAAEDNDTSLSSGIRA), serve as a signal peptide directing secretion. Residues 24–207 (GLQKAVVTLH…SPSTFPPWHQ (184 aa)) are Extracellular-facing. Ig-like C2-type domains lie at 28–92 (AVVT…YTCQ) and 101–192 (PVNL…LRIT). Cystine bridges form between C49–C91 and C131–C175. N-linked (GlcNAc...) asparagine glycans are attached at residues N65, N168, and N183. Residues 208-228 (ITFCLLIGLLFTIDTVMYFSV) traverse the membrane as a helical segment. Residues 229-275 (QKGLRRSTADYEEPEVHWSKEPENKTISEEKQSFRSSRANSETPENR) are Cytoplasmic-facing. The interval 237–275 (ADYEEPEVHWSKEPENKTISEEKQSFRSSRANSETPENR) is disordered. At Y239 the chain carries Phosphotyrosine. The span at 242–261 (PEVHWSKEPENKTISEEKQS) shows a compositional bias: basic and acidic residues. Over residues 262 to 275 (FRSSRANSETPENR) the composition is skewed to polar residues.

In terms of assembly, forms a heterooligomeric complex with ITAM-containing signaling subunits FCER1G. Interacts (via transmembrane domain) with signaling subunits; this interaction is a prerequisite for receptor complex expression on the cell surface and intracellular signal transduction. Binds the Fc region of antigen-complexed IgG. N-glycosylated. Post-translationally, phosphorylated following receptor ligation.

The protein localises to the cell membrane. Functionally, receptor for the invariable Fc fragment of immunoglobulin gamma (IgG). Binds with intermediate affinity to both IgG2a and IgG2b. Can bind to IgG2a and IgG2b monomers. Does not display binding to IgG1 or IgG3. Recognizes neutralizing virus-specific IgGs displayed on the cell surface of infected cells and triggers antibody-dependent cellular cytotoxicity (ADCC). Confers protection to lethal influenza virus infection. On splenic dendritic cells, uptakes antigen immune complexes and efficiently divert them into MHC class I and II antigen presentation pathways to provide for superior priming of CD4-positive and CD8-positive T cell immune responses. Mediates neutrophil activation by IgG complexes redundantly with FCGR2A. Plays a role in promoting bone resorption by enhancing osteoclast differentiation following binding to IgG2a. Also acts as a receptor for the Fc region of immunoglobulin epsilon (IgE). Binds with low affinity to both the a and b allotypes of IgE. Has also been shown to bind to IgE allotype a only but not to allotype b. Binds aggregated IgE but not the monomeric form and bound monomeric IgG is readily displaced by IgE complexes. Binding to IgE promotes macrophage-mediated phagocytosis, antigen presentation to T cells, production of pro-inflammatory cytokines and the late phase of cutaneous allergic reactions. Mediates enhanced ADCC in response to afucosylated IgGs. The sequence is that of Low affinity immunoglobulin gamma Fc region receptor III-A from Cricetulus griseus (Chinese hamster).